We begin with the raw amino-acid sequence, 512 residues long: Calcium-dependent protein kinase 18 (512 aa).

The tract at residues 1 to 25 (MGLCSSSSARRDAGTPGGGNGAGNK) is disordered. The N-myristoyl glycine moiety is linked to residue G2. Residues 52–312 (YALGKLLGHG…AAQALSHEWV (261 aa)) enclose the Protein kinase domain. ATP is bound by residues 58–66 (LGHGQFGYT) and K81. D178 acts as the Proton acceptor in catalysis. Positions 318-348 (ASDIPLDISVLHNMRQFVKYSRFKQFALRAL) are autoinhibitory domain. 4 EF-hand domains span residues 355–390 (EELS…DVPW), 392–427 (LKGP…VHQL), 434–469 (KWKS…KGSI), and 472–499 (LLEE…ASMS). Ca(2+) contacts are provided by D368, D370, N372, T374, E379, D405, N407, D409, E416, D447, D449, D451, Y453, E458, D477, D479, D481, K483, and E488.

This sequence belongs to the protein kinase superfamily. Ser/Thr protein kinase family. CDPK subfamily. As to quaternary structure, interacts with MPK5. In terms of processing, autophosphorylated. Phosphorylated by MPK5.

It localises to the cell membrane. It catalyses the reaction L-seryl-[protein] + ATP = O-phospho-L-seryl-[protein] + ADP + H(+). It carries out the reaction L-threonyl-[protein] + ATP = O-phospho-L-threonyl-[protein] + ADP + H(+). Its activity is regulated as follows. Activated by calcium. Autophosphorylation may play an important role in the regulation of the kinase activity. Its function is as follows. May play a role in signal transduction pathways that involve calcium as a second messenger. Functions upstream of MPK5 in a signaling pathway that represses defense gene expression and negatively regulates resistance to rice blast fungus. Phosphorylates MPK5 at Thr-14 and Thr-32 and activates MPK5 independently of MAP kinase kinase (MKK) phosphorylation. May be involved in arbuscular mycorrhizal presymbiotic phase signaling. Phosphorylates the elicitor-responsive protein ERG1 in vitro. Phosphorylation is calcium-dependent. This Oryza sativa subsp. japonica (Rice) protein is Calcium-dependent protein kinase 18.